The primary structure comprises 101 residues: Large ribosomal subunit protein bL20 (101 aa).

This sequence belongs to the bacterial ribosomal protein bL20 family.

Functionally, binds directly to 23S ribosomal RNA and is necessary for the in vitro assembly process of the 50S ribosomal subunit. It is not involved in the protein synthesizing functions of that subunit. In Carsonella ruddii (strain PV), this protein is Large ribosomal subunit protein bL20 (rplT).